We begin with the raw amino-acid sequence, 259 residues long: Ribosomal RNA small subunit methyltransferase A (259 aa).

S-adenosyl-L-methionine-binding residues include Asn-13, Leu-15, Gly-40, Glu-61, Asp-85, and Asn-103.

Belongs to the class I-like SAM-binding methyltransferase superfamily. rRNA adenine N(6)-methyltransferase family. RsmA subfamily.

Its subcellular location is the cytoplasm. It catalyses the reaction adenosine(1518)/adenosine(1519) in 16S rRNA + 4 S-adenosyl-L-methionine = N(6)-dimethyladenosine(1518)/N(6)-dimethyladenosine(1519) in 16S rRNA + 4 S-adenosyl-L-homocysteine + 4 H(+). In terms of biological role, specifically dimethylates two adjacent adenosines (A1518 and A1519) in the loop of a conserved hairpin near the 3'-end of 16S rRNA in the 30S particle. May play a critical role in biogenesis of 30S subunits. This chain is Ribosomal RNA small subunit methyltransferase A, found in Neisseria meningitidis serogroup A / serotype 4A (strain DSM 15465 / Z2491).